Reading from the N-terminus, the 789-residue chain is Trans-4-hydroxy-L-proline dehydratase (789 aa).

Residues 7–663 (ERTKKLREES…IMGASPNGRL (657 aa)) form the PFL domain. The active-site Cysteine radical intermediate is the cysteine 434. The active-site Proton acceptor is glutamate 436. Residues 670–789 (EGISPEKGGD…EIIGRTEQTF (120 aa)) form the Glycine radical domain. A Glycine radical modification is found at glycine 765.

This sequence belongs to the glycyl radical enzyme (GRE) family. HYPD subfamily. Requires the activating protein PflE to generate the key active site glycyl radical on Gly-765 that is involved in catalysis.

The catalysed reaction is trans-4-hydroxy-L-proline = (S)-1-pyrroline-5-carboxylate + H2O + H(+). Functionally, glycine radical enzyme that catalyzes the dehydration of the non-proteinogenic amino acid trans-4-hydroxy-L-proline (Hyp) to produce delta(1)-pyrroline-5-carboxylate (P5C). Is involved in the anaerobic degradation of 4-hydroxyproline. This chain is Trans-4-hydroxy-L-proline dehydratase, found in Clostridioides difficile (Peptoclostridium difficile).